The chain runs to 174 residues: Co-chaperone protein HscB homolog (174 aa).

Residues 2 to 74 (NYFDLFNVVP…LRRAEHMLSL (73 aa)) enclose the J domain.

It belongs to the HscB family. In terms of assembly, interacts with HscA and stimulates its ATPase activity.

Co-chaperone involved in the maturation of iron-sulfur cluster-containing proteins. Seems to help targeting proteins to be folded toward HscA. The chain is Co-chaperone protein HscB homolog from Shewanella frigidimarina (strain NCIMB 400).